We begin with the raw amino-acid sequence, 498 residues long: Pentatricopeptide repeat-containing protein At2g15980 (498 aa).

7 PPR repeats span residues 244-274 (NATT…MEEE), 280-314 (NVYS…GVVY), 315-349 (DIVA…GIEC), 350-384 (TCLT…GFEA), 385-423 (DGLT…MFYP), 424-458 (SRNC…GFKP), and 459-489 (SQET…MAES).

This sequence belongs to the PPR family. P subfamily.

This chain is Pentatricopeptide repeat-containing protein At2g15980, found in Arabidopsis thaliana (Mouse-ear cress).